The following is a 311-amino-acid chain: 4-hydroxy-3-methylbut-2-enyl diphosphate reductase (311 aa).

Cys-12 serves as a coordination point for [4Fe-4S] cluster. (2E)-4-hydroxy-3-methylbut-2-enyl diphosphate is bound by residues His-41 and His-74. Dimethylallyl diphosphate is bound by residues His-41 and His-74. Isopentenyl diphosphate-binding residues include His-41 and His-74. Cys-96 lines the [4Fe-4S] cluster pocket. His-124 serves as a coordination point for (2E)-4-hydroxy-3-methylbut-2-enyl diphosphate. His-124 provides a ligand contact to dimethylallyl diphosphate. His-124 serves as a coordination point for isopentenyl diphosphate. Glu-126 serves as the catalytic Proton donor. Thr-167 serves as a coordination point for (2E)-4-hydroxy-3-methylbut-2-enyl diphosphate. Cys-197 is a [4Fe-4S] cluster binding site. The (2E)-4-hydroxy-3-methylbut-2-enyl diphosphate site is built by Ser-225, Ser-226, Asn-227, and Ser-269. Dimethylallyl diphosphate-binding residues include Ser-225, Ser-226, Asn-227, and Ser-269. The isopentenyl diphosphate site is built by Ser-225, Ser-226, Asn-227, and Ser-269.

Belongs to the IspH family. Requires [4Fe-4S] cluster as cofactor.

It carries out the reaction isopentenyl diphosphate + 2 oxidized [2Fe-2S]-[ferredoxin] + H2O = (2E)-4-hydroxy-3-methylbut-2-enyl diphosphate + 2 reduced [2Fe-2S]-[ferredoxin] + 2 H(+). The enzyme catalyses dimethylallyl diphosphate + 2 oxidized [2Fe-2S]-[ferredoxin] + H2O = (2E)-4-hydroxy-3-methylbut-2-enyl diphosphate + 2 reduced [2Fe-2S]-[ferredoxin] + 2 H(+). The protein operates within isoprenoid biosynthesis; dimethylallyl diphosphate biosynthesis; dimethylallyl diphosphate from (2E)-4-hydroxy-3-methylbutenyl diphosphate: step 1/1. It functions in the pathway isoprenoid biosynthesis; isopentenyl diphosphate biosynthesis via DXP pathway; isopentenyl diphosphate from 1-deoxy-D-xylulose 5-phosphate: step 6/6. In terms of biological role, catalyzes the conversion of 1-hydroxy-2-methyl-2-(E)-butenyl 4-diphosphate (HMBPP) into a mixture of isopentenyl diphosphate (IPP) and dimethylallyl diphosphate (DMAPP). Acts in the terminal step of the DOXP/MEP pathway for isoprenoid precursor biosynthesis. The polypeptide is 4-hydroxy-3-methylbut-2-enyl diphosphate reductase (Aeromonas salmonicida (strain A449)).